Reading from the N-terminus, the 251-residue chain is Gamma-glutamyl peptidase 4 (251 aa).

The Glutamine amidotransferase type-1 domain occupies 16–213 (SEFAKKTYGG…IDRVLAGGHI (198 aa)). Residue Cys-100 is the Nucleophile of the active site. Active-site residues include His-192 and Glu-194.

It belongs to the peptidase C26 family.

The protein localises to the cytoplasm. It is found in the cytosol. The protein operates within secondary metabolite biosynthesis. In terms of biological role, involved in glucosinolate biosynthesis. Hydrolyzes the gamma-glutamyl peptide bond of several glutathione (GSH) conjugates to produce Cys-Gly conjugates related to glucosinolates. The gamma-Glu-Cys-Gly-GSH conjugates are the sulfur-donating molecule in glucosinolate biosynthesis. The sequence is that of Gamma-glutamyl peptidase 4 from Arabidopsis thaliana (Mouse-ear cress).